A 457-amino-acid chain; its full sequence is Siroheme synthase (457 aa).

Residues M1–T204 are precorrin-2 dehydrogenase /sirohydrochlorin ferrochelatase. NAD(+) is bound by residues D22–V23 and L43–A44. S128 carries the phosphoserine modification. The segment at G216–H457 is uroporphyrinogen-III C-methyltransferase. P225 is an S-adenosyl-L-methionine binding site. Residue D248 is the Proton acceptor of the active site. The active-site Proton donor is the K270. S-adenosyl-L-methionine-binding positions include G301–D303, I306, T331–A332, M382, and G411.

In the N-terminal section; belongs to the precorrin-2 dehydrogenase / sirohydrochlorin ferrochelatase family. This sequence in the C-terminal section; belongs to the precorrin methyltransferase family.

The enzyme catalyses uroporphyrinogen III + 2 S-adenosyl-L-methionine = precorrin-2 + 2 S-adenosyl-L-homocysteine + H(+). It catalyses the reaction precorrin-2 + NAD(+) = sirohydrochlorin + NADH + 2 H(+). It carries out the reaction siroheme + 2 H(+) = sirohydrochlorin + Fe(2+). It functions in the pathway cofactor biosynthesis; adenosylcobalamin biosynthesis; precorrin-2 from uroporphyrinogen III: step 1/1. It participates in cofactor biosynthesis; adenosylcobalamin biosynthesis; sirohydrochlorin from precorrin-2: step 1/1. The protein operates within porphyrin-containing compound metabolism; siroheme biosynthesis; precorrin-2 from uroporphyrinogen III: step 1/1. Its pathway is porphyrin-containing compound metabolism; siroheme biosynthesis; siroheme from sirohydrochlorin: step 1/1. It functions in the pathway porphyrin-containing compound metabolism; siroheme biosynthesis; sirohydrochlorin from precorrin-2: step 1/1. In terms of biological role, multifunctional enzyme that catalyzes the SAM-dependent methylations of uroporphyrinogen III at position C-2 and C-7 to form precorrin-2 via precorrin-1. Then it catalyzes the NAD-dependent ring dehydrogenation of precorrin-2 to yield sirohydrochlorin. Finally, it catalyzes the ferrochelation of sirohydrochlorin to yield siroheme. The protein is Siroheme synthase of Citrobacter koseri (strain ATCC BAA-895 / CDC 4225-83 / SGSC4696).